A 358-amino-acid polypeptide reads, in one-letter code: Nicotinate-nucleotide--dimethylbenzimidazole phosphoribosyltransferase (358 aa).

Glutamate 314 (proton acceptor) is an active-site residue.

This sequence belongs to the CobT family.

The enzyme catalyses 5,6-dimethylbenzimidazole + nicotinate beta-D-ribonucleotide = alpha-ribazole 5'-phosphate + nicotinate + H(+). It participates in nucleoside biosynthesis; alpha-ribazole biosynthesis; alpha-ribazole from 5,6-dimethylbenzimidazole: step 1/2. Its function is as follows. Catalyzes the synthesis of alpha-ribazole-5'-phosphate from nicotinate mononucleotide (NAMN) and 5,6-dimethylbenzimidazole (DMB). The protein is Nicotinate-nucleotide--dimethylbenzimidazole phosphoribosyltransferase of Mycobacterium ulcerans (strain Agy99).